Here is a 367-residue protein sequence, read N- to C-terminus: Protein-glutamate methylesterase/protein-glutamine glutaminase 1 (367 aa).

The region spanning 9 to 126 (KVLCVDDSAL…RDGMLDYSEK (118 aa)) is the Response regulatory domain. Asp60 carries the post-translational modification 4-aspartylphosphate. Residues 168–360 (LVSTEKLIIV…RRIMARLASM (193 aa)) form the CheB-type methylesterase domain. Residues Ser180, His206, and Asp302 contribute to the active site.

Belongs to the CheB family. Post-translationally, phosphorylated by CheA. Phosphorylation of the N-terminal regulatory domain activates the methylesterase activity.

It is found in the cytoplasm. The enzyme catalyses [protein]-L-glutamate 5-O-methyl ester + H2O = L-glutamyl-[protein] + methanol + H(+). It catalyses the reaction L-glutaminyl-[protein] + H2O = L-glutamyl-[protein] + NH4(+). In terms of biological role, involved in chemotaxis. Part of a chemotaxis signal transduction system that modulates chemotaxis in response to various stimuli. Catalyzes the demethylation of specific methylglutamate residues introduced into the chemoreceptors (methyl-accepting chemotaxis proteins or MCP) by CheR. Also mediates the irreversible deamidation of specific glutamine residues to glutamic acid. This Burkholderia pseudomallei (strain K96243) protein is Protein-glutamate methylesterase/protein-glutamine glutaminase 1.